Here is a 908-residue protein sequence, read N- to C-terminus: 26S proteasome non-ATPase regulatory subunit 2 (908 aa).

The residue at position 1 (Met-1) is an N-acetylmethionine. The segment at 1–52 (MEEGGRDKAPVQPQQSPAAALGGTDEKPSGKERRDAGDKDKEQELSEEDKQL) is disordered. The segment covering 10 to 20 (PVQPQQSPAAA) has biased composition (low complexity). Ser-16 is modified (phosphoserine). Residue Thr-24 is modified to Phosphothreonine. The span at 24-52 (TDEKPSGKERRDAGDKDKEQELSEEDKQL) shows a compositional bias: basic and acidic residues. Phosphoserine is present on residues Ser-29 and Ser-147. Phosphotyrosine is present on Tyr-194. 2 positions are modified to phosphoserine: Ser-361 and Ser-363. PC repeat units lie at residues 409–442 (SAAA…YIKS), 443–479 (GALL…TMRL), 480–514 (GSIF…SMEV), 517–551 (VTAL…TELK), and 560–589 (LGLG…PFRS). Lys-551 carries the N6-acetyllysine modification. Over residues 623–643 (KEKEEDKDKKEKKDKDKKEAP) the composition is skewed to basic and acidic residues. The interval 623 to 645 (KEKEEDKDKKEKKDKDKKEAPAD) is disordered. 2 PC repeats span residues 692–723 (LALA…EVSY) and 742–757 (AAML…KDPN). The interval 708–903 (DTLSKFSHDA…LEGFVILRKN (196 aa)) is required for interaction with UBLCP1.

This sequence belongs to the proteasome subunit S2 family. As to quaternary structure, component of the 19S proteasome regulatory particle complex. The 26S proteasome consists of a 20S core particle (CP) and two 19S regulatory subunits (RP). The regulatory particle is made of a lid composed of 9 subunits, a base containing 6 ATPases and few additional components including PSMD2. Interacts with RPGRIP1L. Interacts with CRY1 in a KDM8-dependent manner. Interacts (via C-terminus) with phosphatase UBLCP1 (via ubiquitin-like domain); the interaction recruits UBLCP1 to the 19S regulatory particle where it dephosphorylates 19S subunit PSMC2/RPT1 which impairs PSMC2 ATPase activity and disrupts 26S proteasome assembly.

Functionally, component of the 26S proteasome, a multiprotein complex involved in the ATP-dependent degradation of ubiquitinated proteins. This complex plays a key role in the maintenance of protein homeostasis by removing misfolded or damaged proteins, which could impair cellular functions, and by removing proteins whose functions are no longer required. Therefore, the proteasome participates in numerous cellular processes, including cell cycle progression, apoptosis, or DNA damage repair. Binds to the intracellular domain of tumor necrosis factor type 1 receptor. The binding domain of TRAP1 and TRAP2 resides outside the death domain of TNFR1. The sequence is that of 26S proteasome non-ATPase regulatory subunit 2 (PSMD2) from Pongo abelii (Sumatran orangutan).